Here is a 658-residue protein sequence, read N- to C-terminus: Translation factor GUF1, mitochondrial (658 aa).

The N-terminal 40 residues, 1–40 (MRGCLQTVRWLTSAWQRPPSYPPLSRAAPCRFFNVSIPRN), are a transit peptide targeting the mitochondrion. The region spanning 60–240 (DRFRNFCIVA…TVVEQIPAPV (181 aa)) is the tr-type G domain. GTP is bound by residues 69 to 76 (AHVDHGKS), 133 to 137 (DTPGH), and 187 to 190 (NKVD).

This sequence belongs to the TRAFAC class translation factor GTPase superfamily. Classic translation factor GTPase family. LepA subfamily.

It is found in the mitochondrion inner membrane. It carries out the reaction GTP + H2O = GDP + phosphate + H(+). Functionally, promotes mitochondrial protein synthesis. May act as a fidelity factor of the translation reaction, by catalyzing a one-codon backward translocation of tRNAs on improperly translocated ribosomes. Binds to mitochondrial ribosomes in a GTP-dependent manner. The sequence is that of Translation factor GUF1, mitochondrial from Paracoccidioides brasiliensis (strain Pb03).